Reading from the N-terminus, the 659-residue chain is UvrABC system protein B (659 aa).

The Helicase ATP-binding domain occupies E27 to I414. G40–T47 lines the ATP pocket. Positions Y93–S116 match the Beta-hairpin motif. The 163-residue stretch at Q432 to I594 folds into the Helicase C-terminal domain. Positions E624–N659 constitute a UVR domain.

The protein belongs to the UvrB family. In terms of assembly, forms a heterotetramer with UvrA during the search for lesions. Interacts with UvrC in an incision complex.

Its subcellular location is the cytoplasm. Its function is as follows. The UvrABC repair system catalyzes the recognition and processing of DNA lesions. A damage recognition complex composed of 2 UvrA and 2 UvrB subunits scans DNA for abnormalities. Upon binding of the UvrA(2)B(2) complex to a putative damaged site, the DNA wraps around one UvrB monomer. DNA wrap is dependent on ATP binding by UvrB and probably causes local melting of the DNA helix, facilitating insertion of UvrB beta-hairpin between the DNA strands. Then UvrB probes one DNA strand for the presence of a lesion. If a lesion is found the UvrA subunits dissociate and the UvrB-DNA preincision complex is formed. This complex is subsequently bound by UvrC and the second UvrB is released. If no lesion is found, the DNA wraps around the other UvrB subunit that will check the other stand for damage. This Mycoplasma mobile (strain ATCC 43663 / 163K / NCTC 11711) (Mesomycoplasma mobile) protein is UvrABC system protein B.